Reading from the N-terminus, the 368-residue chain is MEVDNVKPSSSVPQRNWEKENNVQNVDSIFEYNNKQQVEIRNAKPWDKDPHYFKQIKISAIALLKMTMHAKRGGNLEIMGLLQGRIDANSFIILDVFALPVEGTETRVNAQAQAYEYMTVYSEMCDTEGRKEKVVGWYHSHPGYGCWLSGIDVSTQTLNQKFQEPWVAIVIDPLRTMSAGKVDIGAFRTYPEGYRPPDDVPSEYQSIPLAKIEDFGVHCKRYYSLDVSFFKSQLDAHILTSLWNSYWISTLSSSPLFSNVEFLNNQIQDINQKLSAVDKKLQLNDRSVDGHEALMKVVTDAKAVGDELETGRISHLVKQLLFARQAGGGCGCSHASAGSPMDIAVATEPEKAGPSPSAPEPAVEMADA.

An MPN domain is found at 56–193 (IKISAIALLK…IGAFRTYPEG (138 aa)). Zn(2+) is bound by residues His-139, His-141, and Asp-152. The JAMM motif signature appears at 139 to 152 (HSHPGYGCWLSGID). The interval 347–368 (TEPEKAGPSPSAPEPAVEMADA) is disordered.

This sequence belongs to the peptidase M67A family. CSN5 subfamily. As to quaternary structure, component of the CSN complex, probably composed of csn-1, csn-2, csn-3, csn-4, csn-5, csn-6 and csn-7. Within the complex it probably interacts directly with csn-1. Interacts with glh-1 and glh-3. Interacts with lag-1. Interacts with kgb-1. A divalent metal cation is required as a cofactor.

It localises to the cytoplasm. It is found in the nucleus. Functionally, probable protease subunit of the COP9 signalosome complex (CSN), a complex involved in various cellular and developmental processes. The CSN complex is an essential regulator of the ubiquitin (Ubl) conjugation pathway by mediating the deneddylation of the cullin subunits of the SCF-type E3 ligase complexes, leading to decrease the Ubl ligase activity of SCF. In the complex, it probably acts as the catalytic center that mediates the cleavage of Nedd8 from cullins. It however has no metalloprotease activity by itself and requires the other subunits of the CSN complex. The CSN complex plays an essential role in embryogenesis and oogenesis and is required to regulate microtubule stability in the early embryo. Mediates mei-3/katanin targeting for degradation at the meiosis to mitosis transition via deneddylation of cul-3. May stabilize glh-1 protein levels by antagonizing kgb-1. This chain is COP9 signalosome complex subunit 5 (csn-5), found in Caenorhabditis elegans.